A 242-amino-acid chain; its full sequence is tRNA1(Val) (adenine(37)-N6)-methyltransferase (242 aa).

Belongs to the methyltransferase superfamily. tRNA (adenine-N(6)-)-methyltransferase family.

The protein localises to the cytoplasm. The catalysed reaction is adenosine(37) in tRNA1(Val) + S-adenosyl-L-methionine = N(6)-methyladenosine(37) in tRNA1(Val) + S-adenosyl-L-homocysteine + H(+). Its function is as follows. Specifically methylates the adenine in position 37 of tRNA(1)(Val) (anticodon cmo5UAC). This Mannheimia succiniciproducens (strain KCTC 0769BP / MBEL55E) protein is tRNA1(Val) (adenine(37)-N6)-methyltransferase.